We begin with the raw amino-acid sequence, 164 residues long: Thioredoxin domain-containing protein R443 (164 aa).

The helical transmembrane segment at His8–Cys28 threads the bilayer. One can recognise a Thioredoxin domain in the interval Tyr36–Asn163. A disulfide bridge links Cys84 with Cys87.

The protein belongs to the thioredoxin family.

It is found in the host membrane. Its subcellular location is the virion. The protein is Thioredoxin domain-containing protein R443 of Acanthamoeba polyphaga mimivirus (APMV).